Reading from the N-terminus, the 561-residue chain is Melanopsin-A (561 aa).

Residues 1-34 (MRPSTDTMEADTAATHRNFITKVDVPDHAHYTVA) lie on the Extracellular side of the membrane. Residues 35–55 (FFVSVIGTLGVTGNALVQFAF) traverse the membrane as a helical segment. Topologically, residues 56-68 (YSNKKLRNLPNYF) are cytoplasmic. The chain crosses the membrane as a helical span at residues 69–89 (IMNQAASDFLMAFTQSPFFFI). Residues 90–104 (NCLNREWIFGELGCK) are Extracellular-facing. C103 and C181 are joined by a disulfide. Residues 105–125 (LYAFLGALFGITSMINLLAIS) traverse the membrane as a helical segment. At 126-148 (LDRYMVITRPLEAMKWNSKRRTT) the chain is on the cytoplasmic side. Residues 149–169 (IAILLVWLYSLAWSLAPLVGW) form a helical membrane-spanning segment. At 170 to 201 (SSYIPEGLRTSCTWDYVTYTASNRSYTMMLCC) the chain is on the extracellular side. N-linked (GlcNAc...) asparagine glycosylation occurs at N192. A helical transmembrane segment spans residues 202 to 222 (FVFFIPLAIISYCYLFMFLAI). Over 223-255 (RKTSRDVERLGIQVRKSTIIRQKSIRTEWKLAK) the chain is Cytoplasmic. A helical membrane pass occupies residues 256 to 276 (IAFVVIVVYVLSWSPYACVTM). The Extracellular segment spans residues 277-291 (ISWSGHANILSPYSK). A helical membrane pass occupies residues 292–312 (TVPAVIAKASTIYNPFIYAII). K299 bears the N6-(retinylidene)lysine mark. Topologically, residues 313 to 561 (HQKYRKTLAD…EDSLEDNDVV (249 aa)) are cytoplasmic. 4 disordered regions span residues 359 to 385 (AIRR…SYSS), 404 to 448 (ASFR…SATH), 479 to 503 (NGLS…SKSA), and 539 to 561 (SFTD…NDVV). Low complexity predominate over residues 371 to 385 (ASASKTAAGASSYSS). Over residues 550-561 (VDEDSLEDNDVV) the composition is skewed to acidic residues.

This sequence belongs to the G-protein coupled receptor 1 family. Opsin subfamily. In terms of tissue distribution, expressed in retina and brain. Expressed in a subset of retinal horizontal cells as well as a small number of amacrine and retinal ganglion cells. Also expressed in a small population of neurons in the suprachiasmatic nucleus (SNC).

It localises to the cell membrane. Its function is as follows. Photoreceptor implicated in non-image-forming responses to light. This is Melanopsin-A (opn4a) from Gadus morhua (Atlantic cod).